A 371-amino-acid chain; its full sequence is tRNA-specific 2-thiouridylase MnmA (371 aa).

Residues Gly-12–Ser-19 and Met-38 each bind ATP. The interaction with target base in tRNA stretch occupies residues Asn-98–Asp-100. Catalysis depends on Cys-103, which acts as the Nucleophile. Cys-103 and Cys-200 are oxidised to a cystine. Gly-128 serves as a coordination point for ATP. The interaction with tRNA stretch occupies residues Lys-150–Gln-152. Catalysis depends on Cys-200, which acts as the Cysteine persulfide intermediate. Positions Arg-312–Tyr-313 are interaction with tRNA.

Belongs to the MnmA/TRMU family. In terms of assembly, interacts with TusE.

It localises to the cytoplasm. It carries out the reaction S-sulfanyl-L-cysteinyl-[protein] + uridine(34) in tRNA + AH2 + ATP = 2-thiouridine(34) in tRNA + L-cysteinyl-[protein] + A + AMP + diphosphate + H(+). Functionally, catalyzes the 2-thiolation of uridine at the wobble position (U34) of tRNA(Lys), tRNA(Glu) and tRNA(Gln), leading to the formation of s(2)U34, the first step of tRNA-mnm(5)s(2)U34 synthesis. Sulfur is provided by IscS, via a sulfur-relay system. Binds ATP and its substrate tRNAs. This chain is tRNA-specific 2-thiouridylase MnmA, found in Yersinia pseudotuberculosis serotype O:1b (strain IP 31758).